We begin with the raw amino-acid sequence, 957 residues long: MTLLLVSLLLASLLQISSGNKANKHKPWIEAEYQGIVMENDNTVLLNPPLFALDKDAPLRYAGEICGFRLHGSGVPFKAVILDKATGEGLIRAKEPVDCEAQKEHTFTTQAYDCVDGPDGANTKKSHKATVHVRVNDVNEFAPVFVERLYRAAVTEGKLYDRILRVEAIDGDCSPQYSQICYYEILTPNTPFLIDNDGNIENTEKLQYSGEKLYKFTVTAYDCGKKRAADDAEVEIQVKPTCKPSWQGWNKRIEYAPGAGSLALFPGIRLETCDEPLWNIQATIELQTSHVAKGCDRDNYSERALRKLCGAATGEVDLLPMPGPNANWTAGLSVHYSQDSSLIYWFNGTQAVQVPLGGPAGLGSGPQDGLSDHFTLSFWMKHSVTPSKGKKEEETIVCNTIQNEDGYSHYSLTVHGCRIAFLYWPLLESARPVKFLWKLEQVCDDEWHHYALNLEFPTVTLYTDGISFDPALIHDNGLIHPPRREPALMIGACWSEEKNKEKEKGGENSTDTTSGDPLPIHHYFHGYLAGFSVRSGRLESREVIECLYACREGLDYRDFESLGKGMKVHVNPSQSLLTLEGDDVETFNHALQHVAYMNTLRFATPGVRPLRLTTAVKCFSEESCVSIPEVEGYVVVLQPDAPQILLSGTAHFARPAVDFEGPEGVPLFPDLQITCSISHQVEAKADESWQGTVTDTRMSDEIVHNLDGCEISLVGDDLDPERESLLLDMASLQQRGLELTNRSAYLTIAGVETITVYEEILRQARYQLRHGAALYARKFRLSCSEMNGRYSSNEFIVEVNVLHSMNRVAHPSHVLSSQQFLHRGHQPPPEMAGHSLASSHRNSMVPSAATLIIVVCVGFLVLMVILGLVRIHSLHRRVSGTGGPSGASADPKDPDLFWDDSALTIIVNPMESYQNQQTGVAGVAGGQQEEEDSSDSEAADSPSSDERRIIESPPHRY.

Positions 1-19 (MTLLLVSLLLASLLQISSG) are cleaved as a signal peptide. Residues 1–21 (MTLLLVSLLLASLLQISSGNK) are Cytoplasmic-facing. The Extracellular segment spans residues 20 to 848 (NKANKHKPWI…SHRNSMVPSA (829 aa)). Positions 22–42 (ANKHKPWIEAEYQGIVMENDN) form an intramembrane region, helical. 2 Cadherin domains span residues 29–145 (IEAE…APVF) and 146–246 (VERL…KPSW). Residues 43 to 73 (TVLLNPPLFALDKDAPLRYAGEICGFRLHGS) are Cytoplasmic-facing. An intramembrane region (helical) is located at residues 74–94 (GVPFKAVILDKATGEGLIRAK). Over 95-139 (EPVDCEAQKEHTFTTQAYDCVDGPDGANTKKSHKATVHVRVNDVN) the chain is Cytoplasmic. The helical intramembrane region spans 140–160 (EFAPVFVERLYRAAVTEGKLY). Topologically, residues 161–248 (DRILRVEAID…KPTCKPSWQG (88 aa)) are cytoplasmic. A helical membrane pass occupies residues 249–269 (WNKRIEYAPGAGSLALFPGIR). Over 270–357 (LETCDEPLWN…GTQAVQVPLG (88 aa)) the chain is Lumenal. N-linked (GlcNAc...) asparagine glycosylation is found at asparagine 299, asparagine 327, asparagine 347, asparagine 508, and asparagine 741. Residues 849–869 (ATLIIVVCVGFLVLMVILGLV) form a helical membrane-spanning segment. The Cytoplasmic segment spans residues 870–957 (RIHSLHRRVS…RIIESPPHRY (88 aa)). Residues 916-957 (QQTGVAGVAGGQQEEEDSSDSEAADSPSSDERRIIESPPHRY) are disordered. Residues 928 to 938 (QEEEDSSDSEA) show a composition bias toward acidic residues. Residues 944–957 (SDERRIIESPPHRY) are compositionally biased toward basic and acidic residues.

Belongs to the calsyntenin family. As to quaternary structure, interacts (via cadherin domains) with both alpha and beta isoforms of neurexins (NRXN1, NRXN2 and NRXN3). Directly interacts with APBA2. Forms a tripartite complex with APBA2 and APP. Interacts with low affinity with KLC1. Interacts with SLC23A2/SVCT2. In terms of assembly, interacts with CIDEA; inhibiting the lipid transferase activity of CIDEA. Interacts with CIDEC; inhibiting the lipid transferase activity of CIDEC. Post-translationally, proteolytically processed under normal cellular conditions. A primary zeta-cleavage generates a large extracellular (soluble) N-terminal domain (sAlc) and a short C-terminal transmembrane fragment (CTF1). A secondary cleavage catalyzed by gamma-secretase within the transmembrane domain releases the beta-Alc-beta chain in the extracellular milieu and produces an intracellular fragment (AlcICD). This processing is strongly suppressed in the tripartite complex formed with APBA2 and APP, which seems to prevent the association with gamma-secretase. In terms of processing, ubiquitinated: endoplasmic reticulum-localized protein is ubiquitinated and degraded by the endoplasmic reticulum-associated degradation (ERAD) pathway.

Its subcellular location is the postsynaptic cell membrane. The protein localises to the endoplasmic reticulum membrane. It is found in the golgi apparatus membrane. The protein resides in the cell projection. It localises to the dendrite. Its subcellular location is the lipid droplet. Its function is as follows. Postsynaptic adhesion molecule that binds to presynaptic neurexins to mediate both excitatory and inhibitory synapse formation. Promotes synapse development by acting as a cell adhesion molecule at the postsynaptic membrane, which associates with both neurexin-alpha and neurexin-beta proteins at the presynaptic membrane. Regulates the balance between excitatory and inhibitory synapses by inhibiting formation of excitatory parallel-fiber synapses and promoting formation of inhibitory synapses in the same neuron. May also be involved in ascorbate (vitamin C) uptake via its interaction with SLC23A2/SVCT2. Complex formation with APBA2 and APP, stabilizes APP metabolism and enhances APBA2-mediated suppression of beta-APP40 secretion, due to the retardation of intracellular APP maturation. Functionally, adipose-specific isoform that plays a key role in adaptive thermogenesis. Facilitates the efficient use of stored triglyceride by promoting multilocular morphology of thermogenic adipocytes: acts by inhibiting the activity of CIDEA and CIDEC on lipid droplets, thereby preventing lipid droplet fusion and facilitating lipid utilization. May also participate in adaptive thermogenesis by promoting sympathetic innervation of thermogenic adipose tissue: acts by driving secretion of neurotrophic factor S100B from brown adipocytes, stimulating neurite outgrowth from sympathetic neurons. This Rattus norvegicus (Rat) protein is Calsyntenin-3.